Here is a 428-residue protein sequence, read N- to C-terminus: Elongation factor 1-alpha (428 aa).

Residues 5–217 (KPHVNIVFIG…DQIPEPEKPV (213 aa)) enclose the tr-type G domain. The tract at residues 14–21 (GHVDHGKS) is G1. 14-21 (GHVDHGKS) contacts GTP. Ser21 is a binding site for Mg(2+). The G2 stretch occupies residues 68–72 (GITID). The interval 89 to 92 (DAPG) is G3. GTP contacts are provided by residues 89–93 (DAPGH) and 144–147 (NKMD). Residues 144–147 (NKMD) form a G4 region. The segment at 181-183 (SAW) is G5.

It belongs to the TRAFAC class translation factor GTPase superfamily. Classic translation factor GTPase family. EF-Tu/EF-1A subfamily.

The protein localises to the cytoplasm. It carries out the reaction GTP + H2O = GDP + phosphate + H(+). Its function is as follows. GTP hydrolase that promotes the GTP-dependent binding of aminoacyl-tRNA to the A-site of ribosomes during protein biosynthesis. This chain is Elongation factor 1-alpha, found in Pyrococcus furiosus (strain ATCC 43587 / DSM 3638 / JCM 8422 / Vc1).